The primary structure comprises 108 residues: Large ribosomal subunit protein uL23 (108 aa).

Belongs to the universal ribosomal protein uL23 family. In terms of assembly, part of the 50S ribosomal subunit. Contacts protein L29, and trigger factor when it is bound to the ribosome.

Its function is as follows. One of the early assembly proteins it binds 23S rRNA. One of the proteins that surrounds the polypeptide exit tunnel on the outside of the ribosome. Forms the main docking site for trigger factor binding to the ribosome. In Mycoplasmoides gallisepticum (strain R(low / passage 15 / clone 2)) (Mycoplasma gallisepticum), this protein is Large ribosomal subunit protein uL23.